Reading from the N-terminus, the 227-residue chain is Ras-related protein Rab-3C (227 aa).

GTP is bound by residues S39, G42, K43, T44, S45, T56, S57, S61, and T62. T44 provides a ligand contact to Mg(2+). The Switch 1 signature appears at 53-66 (DSFTSAFVSTVGID). Mg(2+) contacts are provided by T62 and D85. T86 is modified (phosphothreonine). Positions 86 to 104 (TAGQERYRTITTAYYRGAM) match the Switch 2 motif. GTP-binding residues include G88, N143, K144, D146, A174, and K175. A phosphoserine mark is found at S196 and S198. At T206 the chain carries Phosphothreonine. S-geranylgeranyl cysteine attachment occurs at residues C225 and C227. C227 bears the Cysteine methyl ester mark.

The protein belongs to the small GTPase superfamily. Rab family. In terms of assembly, interacts with RIMS1, RIMS2, RPH3A and RPH3AL. The GTP-bound form interacts with REP15. Interacts with GDI2, CHM and CHML; phosphorylation at Thr-86 disrupts these interactions. Interacts with MADD (via uDENN domain); the GTP-bound form is preferred for interaction. It depends on Mg(2+) as a cofactor. In terms of processing, phosphorylation of Thr-86 in the switch II region by LRRK2 prevents the association of RAB regulatory proteins, including CHM, CHML and RAB GDP dissociation inhibitor GDI2.

The protein resides in the cell membrane. The catalysed reaction is GTP + H2O = GDP + phosphate + H(+). Regulated by guanine nucleotide exchange factors (GEFs) which promote the exchange of bound GDP for free GTP. Regulated by GTPase activating proteins (GAPs) which increase the GTP hydrolysis activity. Inhibited by GDP dissociation inhibitors (GDIs) which prevent Rab-GDP dissociation. Its function is as follows. The small GTPases Rab are key regulators of intracellular membrane trafficking, from the formation of transport vesicles to their fusion with membranes. Rabs cycle between an inactive GDP-bound form and an active GTP-bound form that is able to recruit to membranes different sets of downstream effectors directly responsible for vesicle formation, movement, tethering and fusion. The sequence is that of Ras-related protein Rab-3C (RAB3C) from Bos taurus (Bovine).